We begin with the raw amino-acid sequence, 388 residues long: Chorismate synthase (388 aa).

NADP(+) is bound by residues arginine 39 and arginine 45. FMN-binding positions include arginine 130–serine 132, asparagine 251–alanine 252, glycine 296, lysine 311–threonine 315, and arginine 337.

The protein belongs to the chorismate synthase family. As to quaternary structure, homotetramer. The cofactor is FMNH2.

The catalysed reaction is 5-O-(1-carboxyvinyl)-3-phosphoshikimate = chorismate + phosphate. The protein operates within metabolic intermediate biosynthesis; chorismate biosynthesis; chorismate from D-erythrose 4-phosphate and phosphoenolpyruvate: step 7/7. Functionally, catalyzes the anti-1,4-elimination of the C-3 phosphate and the C-6 proR hydrogen from 5-enolpyruvylshikimate-3-phosphate (EPSP) to yield chorismate, which is the branch point compound that serves as the starting substrate for the three terminal pathways of aromatic amino acid biosynthesis. This reaction introduces a second double bond into the aromatic ring system. The polypeptide is Chorismate synthase (Lactococcus lactis subsp. cremoris (strain SK11)).